The sequence spans 240 residues: Phosducin-like protein 2 (240 aa).

In terms of domain architecture, Phosducin spans 54–214 (QRDKKIDDMS…MLGQAGAVPT (161 aa)). Phosphoserine is present on residues S63 and S73. The interval 99–240 (FGSVREISGQ…DLEDKSSDFY (142 aa)) is thioredoxin fold.

The protein belongs to the phosducin family.

It localises to the cytoplasm. Modulates the activation of caspases during apoptosis. The chain is Phosducin-like protein 2 from Drosophila melanogaster (Fruit fly).